A 227-amino-acid chain; its full sequence is uncharacterized protein (227 aa).

Transmembrane regions (helical) follow at residues 109-128, 173-192, and 199-221; these read MCNV…FAGI, AILL…ILLT, and ALRV…VMMG.

It localises to the cell membrane. This is an uncharacterized protein from Archaeoglobus fulgidus (strain ATCC 49558 / DSM 4304 / JCM 9628 / NBRC 100126 / VC-16).